The sequence spans 120 residues: Ribosome-binding factor A (120 aa).

The protein belongs to the RbfA family. In terms of assembly, monomer. Binds 30S ribosomal subunits, but not 50S ribosomal subunits or 70S ribosomes.

It localises to the cytoplasm. Its function is as follows. One of several proteins that assist in the late maturation steps of the functional core of the 30S ribosomal subunit. Associates with free 30S ribosomal subunits (but not with 30S subunits that are part of 70S ribosomes or polysomes). Required for efficient processing of 16S rRNA. May interact with the 5'-terminal helix region of 16S rRNA. The polypeptide is Ribosome-binding factor A (Chlamydia felis (strain Fe/C-56) (Chlamydophila felis)).